A 234-amino-acid chain; its full sequence is Glutathione S-transferase sirG (234 aa).

Residues 15-99 (LYVVKATPTS…YLTDAYDHEG (85 aa)) enclose the GST N-terminal domain. The region spanning 105 to 230 (DLWERTQVNN…KALSQKFRPS (126 aa)) is the GST C-terminal domain.

This sequence belongs to the GST superfamily.

It carries out the reaction RX + glutathione = an S-substituted glutathione + a halide anion + H(+). It participates in mycotoxin biosynthesis. Functionally, glutathione S-transferase; part of the gene cluster that mediates the biosynthesis of sirodesmin PL, an epipolythiodioxopiperazine (ETP) characterized by a disulfide bridged cyclic dipeptide and that acts as a phytotoxin which is involved in the blackleg didease of canola. SirD catalyzes the O-prenylation of L-tyrosine (L-Tyr) in the presence of dimethylallyl diphosphate (DMAPP) to yield 4-O-dimethylallyl-L-Tyr, and therefore represents probably the first pathway-specific enzyme in the biosynthesis of sirodesmin PL. 4-O-dimethylallyl-L-Tyr, then undergoes condensation with L-Ser in a reaction catalyzed by the non-ribosomal peptide synthase sirP to form the diketopiperazine (DKP) backbone. Further bishydroxylation of the DKP performed by the cytochrome P450 monooxygenase sirC leads to the production of the intermediate phomamide. This step is essential to form the reactive thiol group required for toxicity of sirodesmin PL. The next steps of sirodesmin biosynthesis are not well understood yet, but some predictions could be made from intermediate compounds identification. Phomamide is converted into phomalizarine via oxidation, probably by sirT. Further oxidation, methylation (by sirM or sirN) and reduction steps convert phomalizarine to deacetyl sirodesmin. Finally, acetyltransferase sirH probably acetylates deacetyl sirodesmin to produce sirodesmin PL. The polypeptide is Glutathione S-transferase sirG (Leptosphaeria maculans (Blackleg fungus)).